Reading from the N-terminus, the 267-residue chain is Small ribosomal subunit protein uS2 (267 aa).

Residues Ile237–Ala267 form a disordered region. Residues Gly238 to Glu261 show a composition bias toward low complexity.

Belongs to the universal ribosomal protein uS2 family.

The chain is Small ribosomal subunit protein uS2 from Chelativorans sp. (strain BNC1).